A 479-amino-acid polypeptide reads, in one-letter code: Glutamyl-tRNA(Gln) amidotransferase subunit A (479 aa).

Active-site charge relay system residues include Lys75 and Ser150. The active-site Acyl-ester intermediate is Ser174.

It belongs to the amidase family. GatA subfamily. Heterotrimer of A, B and C subunits.

It carries out the reaction L-glutamyl-tRNA(Gln) + L-glutamine + ATP + H2O = L-glutaminyl-tRNA(Gln) + L-glutamate + ADP + phosphate + H(+). Allows the formation of correctly charged Gln-tRNA(Gln) through the transamidation of misacylated Glu-tRNA(Gln) in organisms which lack glutaminyl-tRNA synthetase. The reaction takes place in the presence of glutamine and ATP through an activated gamma-phospho-Glu-tRNA(Gln). This Synechococcus sp. (strain ATCC 27144 / PCC 6301 / SAUG 1402/1) (Anacystis nidulans) protein is Glutamyl-tRNA(Gln) amidotransferase subunit A.